A 259-amino-acid chain; its full sequence is Ribosomal RNA small subunit methyltransferase J (259 aa).

S-adenosyl-L-methionine is bound by residues 101–102 (RD), 117–118 (ER), 153–154 (SS), and Asp176.

It belongs to the methyltransferase superfamily. RsmJ family.

The protein resides in the cytoplasm. It catalyses the reaction guanosine(1516) in 16S rRNA + S-adenosyl-L-methionine = N(2)-methylguanosine(1516) in 16S rRNA + S-adenosyl-L-homocysteine + H(+). Functionally, specifically methylates the guanosine in position 1516 of 16S rRNA. This chain is Ribosomal RNA small subunit methyltransferase J, found in Vibrio vulnificus (strain YJ016).